A 232-amino-acid chain; its full sequence is Triggering receptor expressed on myeloid cells 1 (232 aa).

The first 20 residues, 1-20 (MRKAGVWGLLWMLFIEEIQA), serve as a signal peptide directing secretion. In terms of domain architecture, Ig-like V-type spans 21-125 (AAEVFEEKCT…DPIILFHPVR (105 aa)). The Extracellular segment spans residues 21–203 (AAEVFEEKCT…THVNRAPGIS (183 aa)). C41 and C109 are disulfide-bonded. The tract at residues 152–186 (PLPVTTKLRPRPRPRPKPVTQPIPTSADRLSSPGF) is disordered. N192 carries an N-linked (GlcNAc...) asparagine glycan. The chain crosses the membrane as a helical span at residues 204 to 224 (IIIPAACGLLSKTLVFIGLFA). The Cytoplasmic segment spans residues 225–232 (VTHRSFAS).

In terms of assembly, monomer. Homomultimer; when activated. Interacts with TYROBP/DAP12. Interacts with TLR4. Detected in bone marrow, tongue, lung, liver, thymus, spleen, jejunum, ileum and lymph nodes.

Its subcellular location is the cell membrane. In terms of biological role, cell surface receptor that plays important roles in innate and adaptive immunity by amplifying inflammatory responses. Upon activation by various ligands such as PGLYRP1, HMGB1 or HSP70, multimerizes and forms a complex with transmembrane adapter TYROBP/DAP12. In turn, initiates a SYK-mediated cascade of tyrosine phosphorylation, activating multiple downstream mediators such as BTK, MAPK1, MAPK3 or phospholipase C-gamma. This cascade promotes the neutrophil- and macrophage-mediated release of pro-inflammatory cytokines and/or chemokines, as well as their migration and thereby amplifies inflammatory responses that are triggered by bacterial and fungal infections. By also promoting the amplification of inflammatory signals that are initially triggered by Toll-like receptor (TLR) and NOD-like receptor engagement, plays a major role in the pathophysiology of acute and chronic inflammatory diseases of different etiologies including septic shock and atherosclerosis. The polypeptide is Triggering receptor expressed on myeloid cells 1 (TREM1) (Bos taurus (Bovine)).